We begin with the raw amino-acid sequence, 420 residues long: Glutamyl-tRNA reductase (420 aa).

Residues 49-52 (TCNR), Ser109, 114-116 (EPQ), and Gln120 each bind substrate. The Nucleophile role is filled by Cys50. An NADP(+)-binding site is contributed by 189–194 (GAGETI).

Belongs to the glutamyl-tRNA reductase family. Homodimer.

It catalyses the reaction (S)-4-amino-5-oxopentanoate + tRNA(Glu) + NADP(+) = L-glutamyl-tRNA(Glu) + NADPH + H(+). It participates in porphyrin-containing compound metabolism; protoporphyrin-IX biosynthesis; 5-aminolevulinate from L-glutamyl-tRNA(Glu): step 1/2. Its function is as follows. Catalyzes the NADPH-dependent reduction of glutamyl-tRNA(Glu) to glutamate 1-semialdehyde (GSA). The chain is Glutamyl-tRNA reductase from Photorhabdus laumondii subsp. laumondii (strain DSM 15139 / CIP 105565 / TT01) (Photorhabdus luminescens subsp. laumondii).